The following is a 680-amino-acid chain: Galactose oxidase (680 aa).

The N-terminal stretch at 1–24 is a signal peptide; that stretch reads MKHFLSLALCFSSINAVAVTVPHK. The propeptide occupies 25–41; it reads SGGTGSPEGSLQFLSLR. An F5/8 type C domain is found at 42–189; that stretch reads ASAPIGSAIS…SIAEINVFQA (148 aa). A disulfide bond links Cys-59 and Cys-68. 5 Kelch repeats span residues 223 to 268, 279 to 321, 323 to 372, 436 to 490, and 492 to 544; these read RVLM…HDMF, QIVV…TMSD, RVFT…LYRS, KILT…VLPD, and STFI…LLLP. Residues 269–313 constitute a cross-link (3'-(S-cysteinyl)-tyrosine (Cys-Tyr)); it reads CPGISMDGNGQIVVTGGNDAKKTSLYDSSSDSWIPGPDMQVARGY. Position 313 (Tyr-313) interacts with Cu cation. Residues Tyr-536 and His-537 each contribute to the Cu cation site. The Proton acceptor role is filled by Tyr-536. Cysteines 556 and 559 form a disulfide. His-622 serves as a coordination point for Cu cation.

As to quaternary structure, monomer. The cofactor is Cu(2+). Galactose oxidase contains a protein-derived free radical cofactor. In the active state, Tyr-313, which is cross-linked to Cys-269 via a thioether bond, is oxidized to a radical and acts with Cu(2+) as a two-electron acceptor in the oxidation reaction. The cross-link is believed to modulate the redox potential of the tyrosyl radical, which is further stabilized by a stacking interaction with Trp-331 in the active site. The post-translational formation of the cross-link is closely linked to the propeptide cleavage event, and both are copper-dependent, autocatalytic processes. The propeptide may act as an intramolecular chaperone, facilitating thioester bond formation and copper binding by positioning of active-site residues, including copper ligands.

Its subcellular location is the secreted. The catalysed reaction is D-galactose + O2 = D-galacto-hexodialdose + H2O2. Catalyzes the sterospecific oxidation of primary alcohols to the corresponding aldehydes. The biologically relevant substrate of the enzyme is not known as the enzyme exhibits broad substrate specificity from small alcohols through sugars to oligo- and polysaccharides. The protein is Galactose oxidase (GAOA) of Gibberella zeae (strain ATCC MYA-4620 / CBS 123657 / FGSC 9075 / NRRL 31084 / PH-1) (Wheat head blight fungus).